A 286-amino-acid polypeptide reads, in one-letter code: 4-diphosphocytidyl-2-C-methyl-D-erythritol kinase (286 aa).

Residue lysine 13 is part of the active site. 101–111 (PQGAGLGGGSS) is a binding site for ATP. Aspartate 143 is an active-site residue.

Belongs to the GHMP kinase family. IspE subfamily.

The enzyme catalyses 4-CDP-2-C-methyl-D-erythritol + ATP = 4-CDP-2-C-methyl-D-erythritol 2-phosphate + ADP + H(+). The protein operates within isoprenoid biosynthesis; isopentenyl diphosphate biosynthesis via DXP pathway; isopentenyl diphosphate from 1-deoxy-D-xylulose 5-phosphate: step 3/6. In terms of biological role, catalyzes the phosphorylation of the position 2 hydroxy group of 4-diphosphocytidyl-2C-methyl-D-erythritol. The chain is 4-diphosphocytidyl-2-C-methyl-D-erythritol kinase from Idiomarina loihiensis (strain ATCC BAA-735 / DSM 15497 / L2-TR).